The chain runs to 97 residues: Aspartyl/glutamyl-tRNA(Asn/Gln) amidotransferase subunit C (97 aa).

Belongs to the GatC family. Heterotrimer of A, B and C subunits.

It carries out the reaction L-glutamyl-tRNA(Gln) + L-glutamine + ATP + H2O = L-glutaminyl-tRNA(Gln) + L-glutamate + ADP + phosphate + H(+). The catalysed reaction is L-aspartyl-tRNA(Asn) + L-glutamine + ATP + H2O = L-asparaginyl-tRNA(Asn) + L-glutamate + ADP + phosphate + 2 H(+). In terms of biological role, allows the formation of correctly charged Asn-tRNA(Asn) or Gln-tRNA(Gln) through the transamidation of misacylated Asp-tRNA(Asn) or Glu-tRNA(Gln) in organisms which lack either or both of asparaginyl-tRNA or glutaminyl-tRNA synthetases. The reaction takes place in the presence of glutamine and ATP through an activated phospho-Asp-tRNA(Asn) or phospho-Glu-tRNA(Gln). This is Aspartyl/glutamyl-tRNA(Asn/Gln) amidotransferase subunit C from Prochlorococcus marinus (strain MIT 9303).